The sequence spans 151 residues: Chaperonin GroEL (151 aa).

An ATP-binding site is contributed by 41–45 (DGTTT).

It belongs to the chaperonin (HSP60) family. In terms of assembly, forms a cylinder of 14 subunits composed of two heptameric rings stacked back-to-back. Interacts with the co-chaperonin GroES.

The protein localises to the cytoplasm. It catalyses the reaction ATP + H2O + a folded polypeptide = ADP + phosphate + an unfolded polypeptide.. Its function is as follows. Together with its co-chaperonin GroES, plays an essential role in assisting protein folding. The GroEL-GroES system forms a nano-cage that allows encapsulation of the non-native substrate proteins and provides a physical environment optimized to promote and accelerate protein folding. This chain is Chaperonin GroEL, found in Mycolicibacterium fortuitum (Mycobacterium fortuitum).